The chain runs to 137 residues: Large ribosomal subunit protein uL16 (137 aa).

It belongs to the universal ribosomal protein uL16 family. As to quaternary structure, part of the 50S ribosomal subunit.

Binds 23S rRNA and is also seen to make contacts with the A and possibly P site tRNAs. In Bartonella tribocorum (strain CIP 105476 / IBS 506), this protein is Large ribosomal subunit protein uL16.